The sequence spans 214 residues: Nucleoside triphosphate pyrophosphatase (214 aa).

Asp79 (proton acceptor) is an active-site residue.

It belongs to the Maf family. A divalent metal cation is required as a cofactor.

It localises to the cytoplasm. The catalysed reaction is a ribonucleoside 5'-triphosphate + H2O = a ribonucleoside 5'-phosphate + diphosphate + H(+). It carries out the reaction a 2'-deoxyribonucleoside 5'-triphosphate + H2O = a 2'-deoxyribonucleoside 5'-phosphate + diphosphate + H(+). In terms of biological role, nucleoside triphosphate pyrophosphatase. May have a dual role in cell division arrest and in preventing the incorporation of modified nucleotides into cellular nucleic acids. This Rhodococcus jostii (strain RHA1) protein is Nucleoside triphosphate pyrophosphatase.